Here is a 222-residue protein sequence, read N- to C-terminus: Cytidylate kinase (222 aa).

ATP is bound at residue 7–15 (GPSASGKSS).

The protein belongs to the cytidylate kinase family. Type 1 subfamily.

The protein resides in the cytoplasm. The enzyme catalyses CMP + ATP = CDP + ADP. It catalyses the reaction dCMP + ATP = dCDP + ADP. The sequence is that of Cytidylate kinase from Borrelia turicatae (strain 91E135).